We begin with the raw amino-acid sequence, 1087 residues long: Exoglucanase XynX (1087 aa).

An N-terminal signal peptide occupies residues 1–30 (MKNNLSKFVSIFTAFIMIFGTSLFFPHVSA). A CBM-cenC domain is found at 37-188 (ANLVSNGDFE…YIDDVVVTPQ (152 aa)). The region spanning 204 to 527 (QNDIPDLSSV…KPAYWAIADP (324 aa)) is the GH10 domain. The active-site Proton donor is the glutamate 347. Aspartate 389 is a catalytic residue. Glutamate 452 (nucleophile) is an active-site residue. SLH domains are found at residues 903-966 (KKSV…YNGE), 967-1025 (FSDV…KEEN), and 1028-1087 (ATSF…SNNL).

This sequence belongs to the glycosyl hydrolase 10 (cellulase F) family.

It carries out the reaction Hydrolysis of (1-&gt;4)-beta-D-glucosidic linkages in cellulose and cellotetraose, releasing cellobiose from the non-reducing ends of the chains.. The polypeptide is Exoglucanase XynX (xynX) (Acetivibrio thermocellus (Hungateiclostridium thermocellum)).